Consider the following 496-residue polypeptide: Cytochrome P450 3A30 (496 aa).

Cys-441 is a heme binding site.

The protein belongs to the cytochrome P450 family. It depends on heme as a cofactor. Highly expressed in liver and intestine. Moderate expression in gill and spleen. Low expression in kidney, brain and heart.

The protein localises to the endoplasmic reticulum membrane. Its subcellular location is the microsome membrane. It catalyses the reaction an organic molecule + reduced [NADPH--hemoprotein reductase] + O2 = an alcohol + oxidized [NADPH--hemoprotein reductase] + H2O + H(+). Functionally, putative steroid 6-beta-hydroxylase. The protein is Cytochrome P450 3A30 (cyp3a30) of Fundulus heteroclitus (Killifish).